A 486-amino-acid chain; its full sequence is ATP synthase subunit beta (486 aa).

Residue 164–171 participates in ATP binding; sequence GGAGVGKT.

This sequence belongs to the ATPase alpha/beta chains family. As to quaternary structure, F-type ATPases have 2 components, CF(1) - the catalytic core - and CF(0) - the membrane proton channel. CF(1) has five subunits: alpha(3), beta(3), gamma(1), delta(1), epsilon(1). CF(0) has four main subunits: a(1), b(1), b'(1) and c(9-12).

It is found in the cellular thylakoid membrane. The catalysed reaction is ATP + H2O + 4 H(+)(in) = ADP + phosphate + 5 H(+)(out). Its function is as follows. Produces ATP from ADP in the presence of a proton gradient across the membrane. The catalytic sites are hosted primarily by the beta subunits. The chain is ATP synthase subunit beta from Prochlorococcus marinus (strain MIT 9215).